A 313-amino-acid chain; its full sequence is Biotin synthase (313 aa).

The 225-residue stretch at 38–262 (REVQISTLLS…TMPHARVRLS (225 aa)) folds into the Radical SAM core domain. [4Fe-4S] cluster-binding residues include C53, C57, and C60. 4 residues coordinate [2Fe-2S] cluster: C97, C128, C188, and R260.

Belongs to the radical SAM superfamily. Biotin synthase family. In terms of assembly, homodimer. [4Fe-4S] cluster is required as a cofactor. The cofactor is [2Fe-2S] cluster.

It carries out the reaction (4R,5S)-dethiobiotin + (sulfur carrier)-SH + 2 reduced [2Fe-2S]-[ferredoxin] + 2 S-adenosyl-L-methionine = (sulfur carrier)-H + biotin + 2 5'-deoxyadenosine + 2 L-methionine + 2 oxidized [2Fe-2S]-[ferredoxin]. It functions in the pathway cofactor biosynthesis; biotin biosynthesis; biotin from 7,8-diaminononanoate: step 2/2. Catalyzes the conversion of dethiobiotin (DTB) to biotin by the insertion of a sulfur atom into dethiobiotin via a radical-based mechanism. The protein is Biotin synthase of Granulibacter bethesdensis (strain ATCC BAA-1260 / CGDNIH1).